Consider the following 346-residue polypeptide: D-erythrose-4-phosphate dehydrogenase (346 aa).

NAD(+) is bound at residue 11–12 (RI). Substrate-binding positions include 163–165 (SCT), Arg-209, 222–223 (TK), and Arg-245. The active-site Nucleophile is Cys-164. Asn-327 contributes to the NAD(+) binding site.

This sequence belongs to the glyceraldehyde-3-phosphate dehydrogenase family. Epd subfamily. Homotetramer.

The protein localises to the cytoplasm. The enzyme catalyses D-erythrose 4-phosphate + NAD(+) + H2O = 4-phospho-D-erythronate + NADH + 2 H(+). It functions in the pathway cofactor biosynthesis; pyridoxine 5'-phosphate biosynthesis; pyridoxine 5'-phosphate from D-erythrose 4-phosphate: step 1/5. Functionally, catalyzes the NAD-dependent conversion of D-erythrose 4-phosphate to 4-phosphoerythronate. The polypeptide is D-erythrose-4-phosphate dehydrogenase (Vibrio vulnificus (strain YJ016)).